Here is a 104-residue protein sequence, read N- to C-terminus: UPF0145 protein VIBHAR_02090 (104 aa).

The protein belongs to the UPF0145 family.

This chain is UPF0145 protein VIBHAR_02090, found in Vibrio campbellii (strain ATCC BAA-1116).